Here is a 218-residue protein sequence, read N- to C-terminus: Adenylate kinase (218 aa).

10–15 contacts ATP; sequence GAGKGT. An NMP region spans residues 30–59; sequence STGDMLRAAVKAGTPLGIAAKKIMDEGGLV. AMP contacts are provided by residues Thr31, Arg36, 57–59, 85–88, and Gln92; these read GLV and GFPR. The tract at residues 122–159 is LID; that stretch reads GRRVHPASGRTYHVKFNPPKVAGKDDLTGEELIQRDDD. ATP contacts are provided by residues Arg123 and 132-133; that span reads TY. Residues Arg156 and Arg167 each contribute to the AMP site. Gly203 contacts ATP.

The protein belongs to the adenylate kinase family. In terms of assembly, monomer.

The protein resides in the cytoplasm. The catalysed reaction is AMP + ATP = 2 ADP. The protein operates within purine metabolism; AMP biosynthesis via salvage pathway; AMP from ADP: step 1/1. Its function is as follows. Catalyzes the reversible transfer of the terminal phosphate group between ATP and AMP. Plays an important role in cellular energy homeostasis and in adenine nucleotide metabolism. This is Adenylate kinase from Janthinobacterium sp. (strain Marseille) (Minibacterium massiliensis).